Reading from the N-terminus, the 1203-residue chain is Zinc finger and BTB domain-containing protein 38 (1203 aa).

One can recognise a BTB domain in the interval 33 to 100 (CDVTIIVEDT…IYSSTVVVRR (68 aa)). Lys-43 is covalently cross-linked (Glycyl lysine isopeptide (Lys-Gly) (interchain with G-Cter in SUMO2)). Ser-130 is subject to Phosphoserine. Glycyl lysine isopeptide (Lys-Gly) (interchain with G-Cter in SUMO2) cross-links involve residues Lys-145, Lys-148, Lys-151, and Lys-260. The disordered stretch occupies residues 230-334 (EAYRSQPLRE…PSETPGPPAA (105 aa)). Over residues 269 to 280 (TQTQDSDSTTEN) the composition is skewed to polar residues. Positions 299 to 522 (PAPILSHSEP…RRYQCIFCLE (224 aa)) are interaction with CBFA2T3. Over residues 313 to 322 (GDVHFPREDE) the composition is skewed to basic and acidic residues. The segment at 341 to 363 (YNCSCCSKSFDSSTLLGAHMQLH) adopts a C2H2-type 1 zinc-finger fold. A C2H2-type 2; degenerate zinc finger spans residues 370 to 394 (FVCKYCNKQFTTLNRLDRHEQICMR). 3 C2H2-type zinc fingers span residues 459 to 481 (YSCVVCKRSYVTLSSLRRHANVH), 487 to 509 (YPCHYCNKVFALAEYRTRHEIWH), and 515 to 538 (YQCIFCLETFMTYYILKNHQKSFH). Residues Lys-549 and Lys-556 each participate in a glycyl lysine isopeptide (Lys-Gly) (interchain with G-Cter in SUMO2) cross-link. Composition is skewed to polar residues over residues 581–598 (RNSSYESAQGNRQRNESP), 607–628 (LPSSEMPTLNFQDGRNSLTSSP), 635–644 (PSWQGTPTSA), and 731–741 (SNHQSPSQPVA). Disordered regions lie at residues 581–644 (RNSS…PTSA) and 731–776 (SNHQ…VPCN). The span at 747-757 (KDSKPEADKAS) shows a compositional bias: basic and acidic residues. Residues Lys-750, Lys-755, Lys-796, Lys-806, Lys-813, Lys-834, Lys-842, and Lys-849 each participate in a glycyl lysine isopeptide (Lys-Gly) (interchain with G-Cter in SUMO2) cross-link. Disordered stretches follow at residues 857 to 882 (KPKYQMQEETLPRESDPETRGDSPLG) and 895 to 914 (FDEVSDQDSTDKPWRPYYNY). The span at 866-877 (TLPRESDPETRG) shows a compositional bias: basic and acidic residues. Residues Lys-915, Lys-971, Lys-976, Lys-984, Lys-988, Lys-998, Lys-1024, and Lys-1033 each participate in a glycyl lysine isopeptide (Lys-Gly) (interchain with G-Cter in SUMO2) cross-link. C2H2-type zinc fingers lie at residues 1017-1039 (YICELCAKQFQSSSTLKMHMRCH), 1045-1067 (YQCKTCGRRFSVQGNLQKHERIH), 1073-1095 (FICQYCNKAFTLNETLKIHERIH), 1101-1123 (YHCQFCFQGFLYLSTKRNHERRH), and 1132-1154 (FACFQCPKICKTAAALRMHQKKH). Glycyl lysine isopeptide (Lys-Gly) (interchain with G-Cter in SUMO2) cross-links involve residues Lys-1116, Lys-1139, Lys-1142, Lys-1157, and Lys-1190. The interval 1172–1203 (NSDLLESQPCTDSEDSDQKDDIKKPLLKMSFE) is disordered.

Interacts with CBFA2T3, ZBTB4 and RBBP6. Post-translationally, ubiquitinated by RBBP6; leading to its degradation by the proteasome. Widely expressed throughout the adult brain where it is found mainly in neurons. Also expressed in the adrenal medulla. Not detected in non-neural tissues including heart, spleen, liver and muscle. In the embryo, expressed in the developing brain and spinal cord but not in the migratory neural crest. Also expressed in the limbs, transiently in somites, and in the embryonic liver. In the embryonic neural tube, expression is restricted to late postmitotic neurons.

Its subcellular location is the nucleus. It is found in the chromosome. In terms of biological role, transcriptional regulator with bimodal DNA-binding specificity. Binds with a higher affinity to methylated CpG dinucleotides in the consensus sequence 5'-CGCG-3' but can also bind to E-box elements (5'-CACGTG-3'). Can also bind specifically to a single methyl-CpG pair. Represses transcription in a methyl-CpG-dependent manner. Plays an important role in regulating DNA-replication and common fragile sites (CFS) stability in a RBBP6- and MCM10-dependent manner; represses expression of MCM10 which plays an important role in DNA-replication. Acts as a transcriptional activator. May be involved in the differentiation and/or survival of late postmitotic neurons. The sequence is that of Zinc finger and BTB domain-containing protein 38 from Rattus norvegicus (Rat).